The sequence spans 394 residues: Elongation factor Tu 1 (394 aa).

In terms of domain architecture, tr-type G spans 9-204 (KPHCNIGTIG…AIDDYIPQPT (196 aa)). Residues 18–25 (GHVDHGKT) are G1. 18–25 (GHVDHGKT) contacts GTP. T25 provides a ligand contact to Mg(2+). Residues 61–65 (GITIQ) form a G2 region. The interval 82-85 (DCPG) is G3. GTP is bound by residues 82–86 (DCPGH) and 137–140 (NKID). Positions 137–140 (NKID) are G4. A G5 region spans residues 174-176 (SAL).

The protein belongs to the TRAFAC class translation factor GTPase superfamily. Classic translation factor GTPase family. EF-Tu/EF-1A subfamily. As to quaternary structure, monomer.

It localises to the cytoplasm. The enzyme catalyses GTP + H2O = GDP + phosphate + H(+). Its function is as follows. GTP hydrolase that promotes the GTP-dependent binding of aminoacyl-tRNA to the A-site of ribosomes during protein biosynthesis. This chain is Elongation factor Tu 1, found in Orientia tsutsugamushi (strain Boryong) (Rickettsia tsutsugamushi).